A 194-amino-acid chain; its full sequence is Small ribosomal subunit protein uS7 (194 aa).

Belongs to the universal ribosomal protein uS7 family. In terms of assembly, part of the 30S ribosomal subunit.

In terms of biological role, one of the primary rRNA binding proteins, it binds directly to 16S rRNA where it nucleates assembly of the head domain of the 30S subunit. Is located at the subunit interface close to the decoding center. The sequence is that of Small ribosomal subunit protein uS7 from Methanocorpusculum labreanum (strain ATCC 43576 / DSM 4855 / Z).